Here is a 259-residue protein sequence, read N- to C-terminus: Thiazole synthase (259 aa).

The active-site Schiff-base intermediate with DXP is the Lys-99. 1-deoxy-D-xylulose 5-phosphate contacts are provided by residues Gly-160, 186-187, and 208-209; these read AG and NT.

It belongs to the ThiG family. Homotetramer. Forms heterodimers with either ThiH or ThiS.

Its subcellular location is the cytoplasm. The enzyme catalyses [ThiS sulfur-carrier protein]-C-terminal-Gly-aminoethanethioate + 2-iminoacetate + 1-deoxy-D-xylulose 5-phosphate = [ThiS sulfur-carrier protein]-C-terminal Gly-Gly + 2-[(2R,5Z)-2-carboxy-4-methylthiazol-5(2H)-ylidene]ethyl phosphate + 2 H2O + H(+). Its pathway is cofactor biosynthesis; thiamine diphosphate biosynthesis. Catalyzes the rearrangement of 1-deoxy-D-xylulose 5-phosphate (DXP) to produce the thiazole phosphate moiety of thiamine. Sulfur is provided by the thiocarboxylate moiety of the carrier protein ThiS. In vitro, sulfur can be provided by H(2)S. The polypeptide is Thiazole synthase (Porphyromonas gingivalis (strain ATCC BAA-308 / W83)).